A 117-amino-acid polypeptide reads, in one-letter code: Hemerythrin subunit alpha (117 aa).

Fe cation is bound by residues His-24, His-53, Glu-57, His-72, His-76, His-105, and Asp-110.

This sequence belongs to the hemerythrin family. As to quaternary structure, octamer composed of two types of chains: alpha and beta.

In terms of biological role, hemerythrin is a respiratory protein in blood cells of certain marine worms. The oxygen-binding site in each chain contains two iron atoms. The sequence is that of Hemerythrin subunit alpha from Lingula anatina (Brachiopod).